A 164-amino-acid chain; its full sequence is uncharacterized protein (164 aa).

Positions 1–22 (MKTNRSLVVIVSLITATLLLTA) are cleaved as a signal peptide. The N-palmitoyl cysteine moiety is linked to residue Cys23. The S-diacylglycerol cysteine moiety is linked to residue Cys23.

It is found in the cell membrane. This is an uncharacterized protein from Escherichia coli (strain K12).